The chain runs to 151 residues: Pseudo histidine-containing phosphotransfer protein 2 (151 aa).

The HPt domain occupies 38-133 (SPNFVEEVAA…ATLKQKLESY (96 aa)).

Its function is as follows. Functions as a two-component phosphorelay mediator between cytokinin sensor histidine kinases and response regulators (B-type ARRs). Plays an important role in propagating cytokinin signal transduction. This is Pseudo histidine-containing phosphotransfer protein 2 from Oryza sativa subsp. japonica (Rice).